Reading from the N-terminus, the 353-residue chain is Nicotinate-nucleotide--dimethylbenzimidazole phosphoribosyltransferase (353 aa).

The Proton acceptor role is filled by Glu318.

It belongs to the CobT family.

The enzyme catalyses 5,6-dimethylbenzimidazole + nicotinate beta-D-ribonucleotide = alpha-ribazole 5'-phosphate + nicotinate + H(+). The protein operates within nucleoside biosynthesis; alpha-ribazole biosynthesis; alpha-ribazole from 5,6-dimethylbenzimidazole: step 1/2. Its function is as follows. Catalyzes the synthesis of alpha-ribazole-5'-phosphate from nicotinate mononucleotide (NAMN) and 5,6-dimethylbenzimidazole (DMB). In Desulforudis audaxviator (strain MP104C), this protein is Nicotinate-nucleotide--dimethylbenzimidazole phosphoribosyltransferase.